A 176-amino-acid chain; its full sequence is NAD(P)H-quinone oxidoreductase subunit 6, chloroplastic (176 aa).

The next 5 helical transmembrane spans lie at 10–30, 32–52, 63–83, 92–112, and 152–172; these read FLLVFLGSGLILGSLGVVLLT, PIFSAFSLGLTLVCISLLYIL, LLIYVGAINVLIIFGVMFMNG, LWTVGDGMTLMVCTSIFISLI, and FFLPFELISIILLAALIGAIV.

This sequence belongs to the complex I subunit 6 family. As to quaternary structure, NDH is composed of at least 16 different subunits, 5 of which are encoded in the nucleus.

Its subcellular location is the plastid. The protein localises to the chloroplast thylakoid membrane. It carries out the reaction a plastoquinone + NADH + (n+1) H(+)(in) = a plastoquinol + NAD(+) + n H(+)(out). The catalysed reaction is a plastoquinone + NADPH + (n+1) H(+)(in) = a plastoquinol + NADP(+) + n H(+)(out). Functionally, NDH shuttles electrons from NAD(P)H:plastoquinone, via FMN and iron-sulfur (Fe-S) centers, to quinones in the photosynthetic chain and possibly in a chloroplast respiratory chain. The immediate electron acceptor for the enzyme in this species is believed to be plastoquinone. Couples the redox reaction to proton translocation, and thus conserves the redox energy in a proton gradient. The polypeptide is NAD(P)H-quinone oxidoreductase subunit 6, chloroplastic (ndhG) (Lotus japonicus (Lotus corniculatus var. japonicus)).